The following is a 377-amino-acid chain: Bifunctional enzyme IspD/IspF (377 aa).

The interval 1–221 (MTTAAIIVAA…ERILRQDMDV (221 aa)) is 2-C-methyl-D-erythritol 4-phosphate cytidylyltransferase. The interval 222-377 (RLGNGYDVHR…ALATACLVKP (156 aa)) is 2-C-methyl-D-erythritol 2,4-cyclodiphosphate synthase. Residues Asp-228 and His-230 each coordinate a divalent metal cation. 4-CDP-2-C-methyl-D-erythritol 2-phosphate contacts are provided by residues 228–230 (DVH) and 254–255 (HS). His-262 contributes to the a divalent metal cation binding site. 4-CDP-2-C-methyl-D-erythritol 2-phosphate is bound by residues 276–278 (DIG), 352–355 (TTSE), Phe-359, and Arg-362.

In the N-terminal section; belongs to the IspD/TarI cytidylyltransferase family. IspD subfamily. This sequence in the C-terminal section; belongs to the IspF family. A divalent metal cation serves as cofactor.

The enzyme catalyses 2-C-methyl-D-erythritol 4-phosphate + CTP + H(+) = 4-CDP-2-C-methyl-D-erythritol + diphosphate. The catalysed reaction is 4-CDP-2-C-methyl-D-erythritol 2-phosphate = 2-C-methyl-D-erythritol 2,4-cyclic diphosphate + CMP. It participates in isoprenoid biosynthesis; isopentenyl diphosphate biosynthesis via DXP pathway; isopentenyl diphosphate from 1-deoxy-D-xylulose 5-phosphate: step 2/6. The protein operates within isoprenoid biosynthesis; isopentenyl diphosphate biosynthesis via DXP pathway; isopentenyl diphosphate from 1-deoxy-D-xylulose 5-phosphate: step 4/6. Bifunctional enzyme that catalyzes the formation of 4-diphosphocytidyl-2-C-methyl-D-erythritol from CTP and 2-C-methyl-D-erythritol 4-phosphate (MEP) (IspD), and catalyzes the conversion of 4-diphosphocytidyl-2-C-methyl-D-erythritol 2-phosphate (CDP-ME2P) to 2-C-methyl-D-erythritol 2,4-cyclodiphosphate (ME-CPP) with a corresponding release of cytidine 5-monophosphate (CMP) (IspF). The protein is Bifunctional enzyme IspD/IspF of Ruegeria pomeroyi (strain ATCC 700808 / DSM 15171 / DSS-3) (Silicibacter pomeroyi).